We begin with the raw amino-acid sequence, 296 residues long: Glycerol-3-phosphate dehydrogenase [NAD(P)+] (296 aa).

Trp-12, Arg-31, and Lys-80 together coordinate NADPH. Residues Lys-80, Gly-108, and Ser-110 each contribute to the sn-glycerol 3-phosphate site. Ala-112 lines the NADPH pocket. Lys-162, Asp-215, Ser-225, Arg-226, and Asn-227 together coordinate sn-glycerol 3-phosphate. The active-site Proton acceptor is the Lys-162. Arg-226 is an NADPH binding site. NADPH is bound by residues Val-250 and Glu-252.

It belongs to the NAD-dependent glycerol-3-phosphate dehydrogenase family.

Its subcellular location is the cytoplasm. The catalysed reaction is sn-glycerol 3-phosphate + NAD(+) = dihydroxyacetone phosphate + NADH + H(+). It catalyses the reaction sn-glycerol 3-phosphate + NADP(+) = dihydroxyacetone phosphate + NADPH + H(+). It participates in membrane lipid metabolism; glycerophospholipid metabolism. Its function is as follows. Catalyzes the reduction of the glycolytic intermediate dihydroxyacetone phosphate (DHAP) to sn-glycerol 3-phosphate (G3P), the key precursor for phospholipid synthesis. This chain is Glycerol-3-phosphate dehydrogenase [NAD(P)+], found in Sulfurimonas denitrificans (strain ATCC 33889 / DSM 1251) (Thiomicrospira denitrificans (strain ATCC 33889 / DSM 1251)).